The primary structure comprises 432 residues: Putative D-alanyl-D-alanine carboxypeptidase (432 aa).

A helical; Signal-anchor membrane pass occupies residues 7-25 (ATVLLTFSLSAFAVEYPVL).

It belongs to the peptidase S12 family. YfeW subfamily.

The protein localises to the cell inner membrane. It carries out the reaction Preferential cleavage: (Ac)2-L-Lys-D-Ala-|-D-Ala. Also transpeptidation of peptidyl-alanyl moieties that are N-acyl substituents of D-alanine.. In Salmonella typhimurium (strain LT2 / SGSC1412 / ATCC 700720), this protein is Putative D-alanyl-D-alanine carboxypeptidase.